The chain runs to 53 residues: Large ribosomal subunit protein eL24 (53 aa).

Positions 4, 7, 30, and 34 each coordinate Zn(2+). A C4-type zinc finger spans residues 4–34; it reads CSFCHEEIEPGTGKMYVKRDGTIYFFCSSKC.

Belongs to the eukaryotic ribosomal protein eL24 family. In terms of assembly, part of the 50S ribosomal subunit. Forms a cluster with proteins L3 and L14. Zn(2+) serves as cofactor.

Binds to the 23S rRNA. The chain is Large ribosomal subunit protein eL24 from Methanothermobacter thermautotrophicus (strain ATCC 29096 / DSM 1053 / JCM 10044 / NBRC 100330 / Delta H) (Methanobacterium thermoautotrophicum).